The following is an 85-amino-acid chain: Conotoxin MaIr94 (85 aa).

The first 22 residues, 1-22 (MKLTCVLIITVLFLTACQLTAA), serve as a signal peptide directing secretion. A propeptide spanning residues 23 to 49 (GNSRDKQEDPVVRSSGEVQRSEDIKLA) is cleaved from the precursor. Intrachain disulfides connect Cys52–Cys69, Cys59–Cys73, and Cys68–Cys84.

It belongs to the conotoxin O1 superfamily. In terms of tissue distribution, expressed by the venom duct.

The protein resides in the secreted. In terms of biological role, produces no obvious effect on ionic currents when tested on the mouse dorsal rooted ganglia (DRG). The sequence is that of Conotoxin MaIr94 from Conus marmoreus (Marble cone).